The sequence spans 188 residues: CASP-like protein 4B1 (188 aa).

Positions 1 to 34 are disordered; the sequence is MTNPDNMKPVEATDVESAAEKTSEPTPASGTSTI. Topologically, residues 1–46 are cytoplasmic; the sequence is MTNPDNMKPVEATDVESAAEKTSEPTPASGTSTITQRWKREDLIKK. Over residues 24 to 34 the composition is skewed to polar residues; sequence EPTPASGTSTI. A helical transmembrane segment spans residues 47–67; that stretch reads ASPITRGICLLFSLIAFLIMV. Topologically, residues 68–84 are extracellular; the sequence is SNKHGYGRNFNDYEEYR. The helical transmembrane segment at 85–105 threads the bilayer; it reads YVLAISIISTLYTAWQTFAHF. Residues 106–124 lie on the Cytoplasmic side of the membrane; sequence SKREIFDRRTSILVDFSGD. Residues 125–145 form a helical membrane-spanning segment; it reads QIVAYLLISAASSAIPLTNIF. Residues 146–156 lie on the Extracellular side of the membrane; that stretch reads REGQDNIFTDS. The helical transmembrane segment at 157 to 177 threads the bilayer; sequence AASAISMAIFAFIALALSALF. Topologically, residues 178–188 are cytoplasmic; that stretch reads SGYKLSTHSFI.

The protein belongs to the Casparian strip membrane proteins (CASP) family. As to quaternary structure, homodimer and heterodimers.

It localises to the cell membrane. The protein is CASP-like protein 4B1 of Arabidopsis thaliana (Mouse-ear cress).